We begin with the raw amino-acid sequence, 281 residues long: Probable endonuclease 4 (281 aa).

Residues His-69, His-109, Glu-145, Asp-179, His-182, His-216, Asp-229, His-231, and Glu-261 each coordinate Zn(2+).

Belongs to the AP endonuclease 2 family. It depends on Zn(2+) as a cofactor.

The enzyme catalyses Endonucleolytic cleavage to 5'-phosphooligonucleotide end-products.. Endonuclease IV plays a role in DNA repair. It cleaves phosphodiester bonds at apurinic or apyrimidinic (AP) sites, generating a 3'-hydroxyl group and a 5'-terminal sugar phosphate. The protein is Probable endonuclease 4 of Pectobacterium carotovorum subsp. carotovorum (strain PC1).